We begin with the raw amino-acid sequence, 509 residues long: Maturase K (509 aa).

This sequence belongs to the intron maturase 2 family. MatK subfamily.

The protein localises to the plastid. It localises to the chloroplast. Its function is as follows. Usually encoded in the trnK tRNA gene intron. Probably assists in splicing its own and other chloroplast group II introns. The polypeptide is Maturase K (Nicotiana plumbaginifolia (Leadwort-leaved tobacco)).